Reading from the N-terminus, the 309-residue chain is D-alanine--D-alanine ligase (309 aa).

Residues K104–E306 form the ATP-grasp domain. Position 137 to 192 (I137 to T192) interacts with ATP. Mg(2+) is bound by residues D260, E273, and N275.

It belongs to the D-alanine--D-alanine ligase family. Mg(2+) serves as cofactor. Requires Mn(2+) as cofactor.

It localises to the cytoplasm. It catalyses the reaction 2 D-alanine + ATP = D-alanyl-D-alanine + ADP + phosphate + H(+). It functions in the pathway cell wall biogenesis; peptidoglycan biosynthesis. Cell wall formation. This Buchnera aphidicola subsp. Baizongia pistaciae (strain Bp) protein is D-alanine--D-alanine ligase.